The chain runs to 293 residues: Methylsterol monooxygenase 1 (293 aa).

Helical transmembrane passes span 55 to 75 and 100 to 120; these read LIVHEALYFLFCLPGFLFQFI and VLLFNHFCIQLPLICGTYYFT. The region spanning 145 to 274 is the Fatty acid hydroxylase domain; the sequence is CAVIEDTWHY…FTWWDRIFGT (130 aa). Positions 157-161 match the Histidine box-1 motif; that stretch reads HRLLH. The Histidine box-2 motif lies at 170–174; that stretch reads HKVHH. The chain crosses the membrane as a helical span at residues 199-219; the sequence is FFIGIVLLCDHVILLWAWVTI. A Histidine box-3 motif is present at residues 249–255; the sequence is HHDFHHM.

Belongs to the sterol desaturase family. The cofactor is Fe cation. Post-translationally, ubiquitinated by MARCHF6, leading to proteasomal degradation.

It is found in the endoplasmic reticulum membrane. It carries out the reaction 4,4-dimethyl-5alpha-cholest-7-en-3beta-ol + 6 Fe(II)-[cytochrome b5] + 3 O2 + 5 H(+) = 4alpha-carboxy-4beta-methyl-5alpha-cholest-7-ene-3beta-ol + 6 Fe(III)-[cytochrome b5] + 4 H2O. It catalyses the reaction 4,4-dimethyl-5alpha-cholesta-8,24-dien-3beta-ol + 6 Fe(II)-[cytochrome b5] + 3 O2 + 5 H(+) = 4beta-methylzymosterol-4alpha-carboxylate + 6 Fe(III)-[cytochrome b5] + 4 H2O. The enzyme catalyses 4alpha-methylzymosterol + 6 Fe(II)-[cytochrome b5] + 3 O2 + 5 H(+) = 4alpha-carboxyzymosterol + 6 Fe(III)-[cytochrome b5] + 4 H2O. The catalysed reaction is 4alpha-methyl-5alpha-cholest-7-en-3beta-ol + 6 Fe(II)-[cytochrome b5] + 3 O2 + 5 H(+) = 4alpha-carboxy-5alpha-cholest-7-en-3beta-ol + 6 Fe(III)-[cytochrome b5] + 4 H2O. It carries out the reaction 4,4-dimethyl-5alpha-cholest-8-en-3beta-ol + 6 Fe(II)-[cytochrome b5] + 3 O2 + 5 H(+) = 4alpha-carboxy-4beta-methyl-5alpha-cholest-8-en-3beta-ol + 6 Fe(III)-[cytochrome b5] + 4 H2O. It catalyses the reaction 4alpha-methyl-5alpha-cholest-8-en-3beta-ol + 6 Fe(II)-[cytochrome b5] + 3 O2 + 5 H(+) = 4alpha-carboxy-5alpha-cholest-8-ene-3beta-ol + 6 Fe(III)-[cytochrome b5] + 4 H2O. The protein operates within steroid biosynthesis; zymosterol biosynthesis; zymosterol from lanosterol: step 3/6. It functions in the pathway steroid biosynthesis; cholesterol biosynthesis. In terms of biological role, catalyzes the three-step monooxygenation required for the demethylation of 4,4-dimethyl and 4alpha-methylsterols, which can be subsequently metabolized to cholesterol. The polypeptide is Methylsterol monooxygenase 1 (MSMO1) (Pongo abelii (Sumatran orangutan)).